We begin with the raw amino-acid sequence, 384 residues long: Probable protein phosphatase 2C 42 (384 aa).

A PPM-type phosphatase domain is found at 58-358 (DFSMAVIQAN…DDITVIVVFL (301 aa)). Mn(2+) contacts are provided by Asp-89, Gly-90, Asp-290, and Asp-349.

The protein belongs to the PP2C family. Requires Mg(2+) as cofactor. Mn(2+) serves as cofactor.

It carries out the reaction O-phospho-L-seryl-[protein] + H2O = L-seryl-[protein] + phosphate. The enzyme catalyses O-phospho-L-threonyl-[protein] + H2O = L-threonyl-[protein] + phosphate. Dephosphorylates and represses plasma membrane H(+)-ATPases (PM H(+)-ATPases, e.g. AHA1 and AHA2), thus influencing negatively plant growth and fitness. Promotes the apical hook maintenance of etiolated seedlings. The polypeptide is Probable protein phosphatase 2C 42 (Arabidopsis thaliana (Mouse-ear cress)).